Consider the following 2639-residue polypeptide: BAH and coiled-coil domain-containing protein 1 (2639 aa).

12 disordered regions span residues 23-49 (SAAAAARLAPAGPAAQPPAHFQPGKYF), 84-107 (SAASTHPSGPSSSPPEQAYRGSHP), 188-249 (APAH…GKER), 669-702 (FLSSKGPGQSERPDCARSREHDTTHGDGEVRQPP), 716-746 (VSRSEAAYGTNTARQGRAAPAFKGGGGPRST), 939-1047 (QRAA…QSTA), 1104-1331 (SDVH…HSSG), 1457-1513 (QREL…KKVK), 1582-1666 (KVKS…LGTE), 1722-1776 (EVKI…RDAL), 1868-1893 (FDDNSSFSEEEEDEEEEEEDSGPLSA), and 2057-2119 (KKVS…DHFL). 2 stretches are compositionally biased toward low complexity: residues 24–41 (AAAAARLAPAGPAAQPPA) and 84–98 (SAASTHPSGPSSSPP). Composition is skewed to basic and acidic residues over residues 211–247 (GPKDFDRFLVGKELGREKAGKAAEGKERPAAEEDGGK) and 679–698 (ERPDCARSREHDTTHGDGEV). N6-acetyllysine is present on Lys222. Residues 946 to 964 (RKPEDQHLDLEEPAQEKAP) are compositionally biased toward basic and acidic residues. The span at 972–988 (ALTPTAPGAPSPAAGPT) shows a compositional bias: low complexity. A compositionally biased stretch (pro residues) spans 989-1013 (KLPPCCHPPDPKPPASSPTPPPRPS). The span at 1106 to 1122 (VHSSNLEDPETMQTTAP) shows a compositional bias: polar residues. Residues 1182–1198 (LEGLQELQCAALLEAGG) are compositionally biased toward low complexity. Residues 1212 to 1221 (AREERSREEG) show a composition bias toward basic and acidic residues. A compositionally biased stretch (acidic residues) spans 1244–1275 (LEDEGEQPAPEEDELEEDELGQQSMEDSEEDC). Pro residues predominate over residues 1307-1324 (DSPPDPQPPAASGPPSTV). Residues 1439–1473 (EVGMRVRLAELQRRYKEKQRELARLQRKHDHERDE) are a coiled coil. Residues 1457–1475 (QRELARLQRKHDHERDESS) show a composition bias toward basic and acidic residues. The segment covering 1478–1492 (PARRGPGRPRKRKHS) has biased composition (basic residues). The segment covering 1751–1761 (GKKKAKGKAKG) has biased composition (basic residues). The segment covering 1868-1888 (FDDNSSFSEEEEDEEEEEEDS) has biased composition (acidic residues). Ser2274 is subject to Phosphoserine. Disordered stretches follow at residues 2317–2336 (SDCHSSFSDEDEDGPGLAAG), 2348–2383 (SSSSSGSSTSSSSGSVSTSSLCSSDNEDSSYSSDDE), and 2432–2472 (GAGS…ENRP). Residues 2348–2371 (SSSSSGSSTSSSSGSVSTSSLCSS) are compositionally biased toward low complexity. Residues 2372–2383 (DNEDSSYSSDDE) are compositionally biased toward acidic residues. The span at 2432-2442 (GAGSGPSSSSK) shows a compositional bias: low complexity. The BAH domain maps to 2513–2633 (ETLRVGDCAV…PTTGRLVTAD (121 aa)).

This Homo sapiens (Human) protein is BAH and coiled-coil domain-containing protein 1.